Here is a 515-residue protein sequence, read N- to C-terminus: MTFLFSTLQLSLFSLALVIFGYIFLRKQLSRCEVDSSTIPEPLGALPLFGHLHLLRGKKLLCKKLAAMSQKHGPIFSLKLGFYRLVVASDPKTVKDCFTTNDLATATRPNIAFGRYVGYNNASLTLAPYGDYWRELRKIVTVHLFSNHSIEMLGHIRSSEVNTLIKHLYKGNGGTSIVKIDMLFEFLTFNIILRKMVGKRIGFGEVNSDEWRYKEALKHCEYLAVIPMIGDVIPWLGWLDFAKNSQMKRLFKELDSVNTKWLHEHLKKRSRNEKDQERTIMDLLLDILPEDIVISGHVRDVIVKATILALTLTGSDSTSITLTWAVSLLLNNPAALEAAQEEIDNSVGKGRWIEESDIQNLKYLQAIVKETHRLYPPAPLTGIREAREDCFVGGYRVEKGTRLLVNIWKLHRDPKIWPDPKTFKPERFMEDKSQCEKSNFEYIPFGSGRRSCPGVNLGLRVVHFVLARLLQGFELHKVSDEPLDMAEGPGLALPKINPVEVVVMPRLDPKLYSLL.

A helical transmembrane segment spans residues 3–23 (FLFSTLQLSLFSLALVIFGYI). His-219 provides a ligand contact to substrate. Residue Lys-252 forms a Glycyl lysine isopeptide (Lys-Gly) (interchain with G-Cter in ubiquitin) linkage. Residue Cys-452 participates in heme binding.

Belongs to the cytochrome P450 family. It depends on heme as a cofactor. As to expression, expressed in stems, flower peduncles, receptacle of developing and mature flowers and in stigma of mature opening flower buds.

Its subcellular location is the membrane. It catalyses the reaction (3S,6E)-nerolidol + reduced [NADPH--hemoprotein reductase] + O2 = (3E)-4,8-dimethylnona-1,3,7-triene + but-3-en-2-one + oxidized [NADPH--hemoprotein reductase] + 2 H2O + H(+). The catalysed reaction is (6E,10E)-geranyllinalool + reduced [NADPH--hemoprotein reductase] + O2 = (3E,7E)-4,8,12-trimethyltrideca 1,3,7,11-tetraene + but-3-en-2-one + oxidized [NADPH--hemoprotein reductase] + 2 H2O + H(+). It participates in secondary metabolite biosynthesis; terpenoid biosynthesis. Its function is as follows. Involved in the biosynthesis of homoterpenes, attractants of herbivores parasitoids and predators (e.g. predatory mites and parasitoid wasps). Catalyzes the conversion of the C20 (E,E)-geranyllinalool to C16-homoterpene 4,8,12-trimethyltrideca-1,3,7,11-tetraene (TMTT) of the C15 (E)-nerolidol to C11-homoterpene (E)-4,8-dimethyl-1,3,7-nonatriene (DMNT); these volatile compounds are produced upon insect herbivore attack and emitted from flowers and vegetative tissues during herbivore feeding. Required during resistance responses to the fungus Alternaria brassicae. Prevents oviposition of the phloem-feeding insect cabbage whitefly (Aleyrodes proletella). This Arabidopsis thaliana (Mouse-ear cress) protein is Dimethylnonatriene synthase.